Reading from the N-terminus, the 397-residue chain is Succinate--CoA ligase [ADP-forming] subunit beta (397 aa).

The ATP-grasp domain occupies 9-254; that stretch reads KALLKSFGAP…ETEQDAKELE (246 aa). ATP is bound by residues lysine 46, 53 to 55, glutamate 109, alanine 112, and glutamate 117; that span reads GRG. The Mg(2+) site is built by asparagine 209 and aspartate 223. Substrate is bound by residues asparagine 274 and 331–333; that span reads GIM.

It belongs to the succinate/malate CoA ligase beta subunit family. Heterotetramer of two alpha and two beta subunits. It depends on Mg(2+) as a cofactor.

It carries out the reaction succinate + ATP + CoA = succinyl-CoA + ADP + phosphate. It catalyses the reaction GTP + succinate + CoA = succinyl-CoA + GDP + phosphate. It participates in carbohydrate metabolism; tricarboxylic acid cycle; succinate from succinyl-CoA (ligase route): step 1/1. Succinyl-CoA synthetase functions in the citric acid cycle (TCA), coupling the hydrolysis of succinyl-CoA to the synthesis of either ATP or GTP and thus represents the only step of substrate-level phosphorylation in the TCA. The beta subunit provides nucleotide specificity of the enzyme and binds the substrate succinate, while the binding sites for coenzyme A and phosphate are found in the alpha subunit. The sequence is that of Succinate--CoA ligase [ADP-forming] subunit beta from Hyphomonas neptunium (strain ATCC 15444).